Reading from the N-terminus, the 404-residue chain is uncharacterized protein (404 aa).

The span at 262–278 shows a compositional bias: polar residues; it reads VSTGDTSPYGTEDSSPA. Disordered regions lie at residues 262–307 and 320–340; these read VSTG…SPSL and KKSH…GGAD. Residues Ser268, Ser276, and Ser279 each carry the phosphoserine modification. A phosphothreonine mark is found at Thr290 and Thr293. Residues Ser304, Ser306, Ser324, Ser358, and Ser362 each carry the phosphoserine modification. Residues 320–336 show a composition bias toward basic and acidic residues; it reads KKSHSANDSEEFFREDD.

This is an uncharacterized protein from Rattus norvegicus (Rat).